A 252-amino-acid polypeptide reads, in one-letter code: Putative pinene synthase (252 aa).

It belongs to the terpene synthase family. Tpsa subfamily.

The protein is Putative pinene synthase of Fragaria ananassa (Strawberry).